Reading from the N-terminus, the 486-residue chain is Cardiolipin synthase A (486 aa).

2 consecutive transmembrane segments (helical) span residues 3–23 and 38–58; these read TFYTVISWLSVFGYWLLIAGV and MAWLLIIYILPLVGIIAYLSF. PLD phosphodiesterase domains follow at residues 219-246 and 399-426; these read MDLRQHRKIVLIDNYVAYTGSMNMVDPR and EGGLLHSKSVLVDGQLSLVGTVNLDMRS. Residues histidine 224, lysine 226, aspartate 231, histidine 404, lysine 406, and aspartate 411 contribute to the active site.

It belongs to the phospholipase D family. Cardiolipin synthase subfamily. ClsA sub-subfamily.

Its subcellular location is the cell inner membrane. The catalysed reaction is 2 a 1,2-diacyl-sn-glycero-3-phospho-(1'-sn-glycerol) = a cardiolipin + glycerol. Catalyzes the reversible phosphatidyl group transfer from one phosphatidylglycerol molecule to another to form cardiolipin (CL) (diphosphatidylglycerol) and glycerol. This chain is Cardiolipin synthase A, found in Yersinia pseudotuberculosis serotype IB (strain PB1/+).